Here is a 624-residue protein sequence, read N- to C-terminus: Dihydroxy-acid dehydratase (624 aa).

Aspartate 81 provides a ligand contact to Mg(2+). A [2Fe-2S] cluster-binding site is contributed by cysteine 122. Aspartate 123 and lysine 124 together coordinate Mg(2+). At lysine 124 the chain carries N6-carboxylysine. Cysteine 195 serves as a coordination point for [2Fe-2S] cluster. Glutamate 499 contributes to the Mg(2+) binding site. Serine 525 serves as the catalytic Proton acceptor.

Belongs to the IlvD/Edd family. In terms of assembly, homodimer. Requires [2Fe-2S] cluster as cofactor. It depends on Mg(2+) as a cofactor.

It catalyses the reaction (2R)-2,3-dihydroxy-3-methylbutanoate = 3-methyl-2-oxobutanoate + H2O. The catalysed reaction is (2R,3R)-2,3-dihydroxy-3-methylpentanoate = (S)-3-methyl-2-oxopentanoate + H2O. Its pathway is amino-acid biosynthesis; L-isoleucine biosynthesis; L-isoleucine from 2-oxobutanoate: step 3/4. It participates in amino-acid biosynthesis; L-valine biosynthesis; L-valine from pyruvate: step 3/4. Functionally, functions in the biosynthesis of branched-chain amino acids. Catalyzes the dehydration of (2R,3R)-2,3-dihydroxy-3-methylpentanoate (2,3-dihydroxy-3-methylvalerate) into 2-oxo-3-methylpentanoate (2-oxo-3-methylvalerate) and of (2R)-2,3-dihydroxy-3-methylbutanoate (2,3-dihydroxyisovalerate) into 2-oxo-3-methylbutanoate (2-oxoisovalerate), the penultimate precursor to L-isoleucine and L-valine, respectively. This is Dihydroxy-acid dehydratase from Shewanella baltica (strain OS155 / ATCC BAA-1091).